The sequence spans 445 residues: Cytoplasmic tRNA 2-thiolation protein 2 (445 aa).

Residues 1 to 11 are compositionally biased toward acidic residues; sequence MCSIGEDDFGD. Residues 1 to 26 are disordered; the sequence is MCSIGEDDFGDEGGVHAMKEESPLPE. Residues 13 to 22 are compositionally biased toward basic and acidic residues; the sequence is GGVHAMKEES.

This sequence belongs to the CTU2/NCS2 family.

Its subcellular location is the cytoplasm. Its pathway is tRNA modification; 5-methoxycarbonylmethyl-2-thiouridine-tRNA biosynthesis. Its function is as follows. Plays a central role in 2-thiolation of mcm(5)S(2)U at tRNA wobble positions of tRNA(Lys), tRNA(Glu) and tRNA(Gln). May act by forming a heterodimer with NCS6/CTU1 that ligates sulfur from thiocarboxylated URM1 onto the uridine of tRNAs at wobble position. This chain is Cytoplasmic tRNA 2-thiolation protein 2, found in Aedes aegypti (Yellowfever mosquito).